We begin with the raw amino-acid sequence, 322 residues long: Adenine deaminase (322 aa).

Zn(2+) is bound by residues histidine 11, histidine 13, and histidine 189. The Proton donor role is filled by glutamate 192. Aspartate 270 is a Zn(2+) binding site. Residue aspartate 271 coordinates substrate.

This sequence belongs to the metallo-dependent hydrolases superfamily. Adenosine and AMP deaminases family. Adenine deaminase type 2 subfamily. The cofactor is Zn(2+).

It carries out the reaction adenine + H2O + H(+) = hypoxanthine + NH4(+). In terms of biological role, catalyzes the hydrolytic deamination of adenine to hypoxanthine. Plays an important role in the purine salvage pathway and in nitrogen catabolism. The protein is Adenine deaminase of Rhizobium rhizogenes (strain K84 / ATCC BAA-868) (Agrobacterium radiobacter).